Here is a 110-residue protein sequence, read N- to C-terminus: Large ribosomal subunit protein uL22 (110 aa).

It belongs to the universal ribosomal protein uL22 family. As to quaternary structure, part of the 50S ribosomal subunit.

In terms of biological role, this protein binds specifically to 23S rRNA; its binding is stimulated by other ribosomal proteins, e.g. L4, L17, and L20. It is important during the early stages of 50S assembly. It makes multiple contacts with different domains of the 23S rRNA in the assembled 50S subunit and ribosome. Functionally, the globular domain of the protein is located near the polypeptide exit tunnel on the outside of the subunit, while an extended beta-hairpin is found that lines the wall of the exit tunnel in the center of the 70S ribosome. The polypeptide is Large ribosomal subunit protein uL22 (Stutzerimonas stutzeri (strain A1501) (Pseudomonas stutzeri)).